The following is a 319-amino-acid chain: Acetyl-coenzyme A carboxylase carboxyl transferase subunit alpha (319 aa).

Positions 36–293 (EVERLKTKLE…HDAFLSELDR (258 aa)) constitute a CoA carboxyltransferase C-terminal domain.

Belongs to the AccA family. As to quaternary structure, acetyl-CoA carboxylase is a heterohexamer composed of biotin carboxyl carrier protein (AccB), biotin carboxylase (AccC) and two subunits each of ACCase subunit alpha (AccA) and ACCase subunit beta (AccD).

The protein resides in the cytoplasm. The enzyme catalyses N(6)-carboxybiotinyl-L-lysyl-[protein] + acetyl-CoA = N(6)-biotinyl-L-lysyl-[protein] + malonyl-CoA. It participates in lipid metabolism; malonyl-CoA biosynthesis; malonyl-CoA from acetyl-CoA: step 1/1. Functionally, component of the acetyl coenzyme A carboxylase (ACC) complex. First, biotin carboxylase catalyzes the carboxylation of biotin on its carrier protein (BCCP) and then the CO(2) group is transferred by the carboxyltransferase to acetyl-CoA to form malonyl-CoA. The protein is Acetyl-coenzyme A carboxylase carboxyl transferase subunit alpha of Dichelobacter nodosus (strain VCS1703A).